We begin with the raw amino-acid sequence, 226 residues long: Pyridoxal 5'-phosphate synthase subunit PdxT (226 aa).

L-glutamine is bound at residue 60 to 62; that stretch reads GES. Cysteine 92 functions as the Nucleophile in the catalytic mechanism. L-glutamine contacts are provided by residues arginine 121 and 150–151; that span reads IR. Catalysis depends on charge relay system residues histidine 191 and glutamate 193.

This sequence belongs to the glutaminase PdxT/SNO family. As to quaternary structure, in the presence of PdxS, forms a dodecamer of heterodimers. Only shows activity in the heterodimer.

The enzyme catalyses aldehydo-D-ribose 5-phosphate + D-glyceraldehyde 3-phosphate + L-glutamine = pyridoxal 5'-phosphate + L-glutamate + phosphate + 3 H2O + H(+). It carries out the reaction L-glutamine + H2O = L-glutamate + NH4(+). The protein operates within cofactor biosynthesis; pyridoxal 5'-phosphate biosynthesis. In terms of biological role, catalyzes the hydrolysis of glutamine to glutamate and ammonia as part of the biosynthesis of pyridoxal 5'-phosphate. The resulting ammonia molecule is channeled to the active site of PdxS. The sequence is that of Pyridoxal 5'-phosphate synthase subunit PdxT from Nocardia farcinica (strain IFM 10152).